A 61-amino-acid polypeptide reads, in one-letter code: MAKCFITGKKKSFGNTRSHAMNASRRDWKANLQKVRILVDGKPKRVWVSARALKSGKVKRV.

The protein belongs to the bacterial ribosomal protein bL28 family.

In Geobacillus stearothermophilus (Bacillus stearothermophilus), this protein is Large ribosomal subunit protein bL28 (rpmB).